Reading from the N-terminus, the 72-residue chain is Translation initiation factor IF-1 (72 aa).

The S1-like domain occupies 1 to 72 (MSKEENIEMQ…TKGRIIFRSR (72 aa)).

The protein belongs to the IF-1 family. As to quaternary structure, component of the 30S ribosomal translation pre-initiation complex which assembles on the 30S ribosome in the order IF-2 and IF-3, IF-1 and N-formylmethionyl-tRNA(fMet); mRNA recruitment can occur at any time during PIC assembly.

The protein resides in the cytoplasm. Its function is as follows. One of the essential components for the initiation of protein synthesis. Stabilizes the binding of IF-2 and IF-3 on the 30S subunit to which N-formylmethionyl-tRNA(fMet) subsequently binds. Helps modulate mRNA selection, yielding the 30S pre-initiation complex (PIC). Upon addition of the 50S ribosomal subunit IF-1, IF-2 and IF-3 are released leaving the mature 70S translation initiation complex. The polypeptide is Translation initiation factor IF-1 (Buchnera aphidicola subsp. Acyrthosiphon pisum (strain APS) (Acyrthosiphon pisum symbiotic bacterium)).